A 449-amino-acid polypeptide reads, in one-letter code: Methionine aminopeptidase 2 (449 aa).

The disordered stretch occupies residues 1–91 (MAAQAAPELA…PRIPLTTLFP (91 aa)). Residues 34-50 (EEAENEGDSEDDRDDEQ) are compositionally biased toward acidic residues. Over residues 61–75 (KKKKKKRPKKKKKTA) the composition is skewed to basic residues. His-199 provides a ligand contact to substrate. 3 residues coordinate a divalent metal cation: Asp-219, Asp-230, and His-299. His-307 contacts substrate. Positions 335 and 430 each coordinate a divalent metal cation.

Belongs to the peptidase M24A family. Methionine aminopeptidase eukaryotic type 2 subfamily. Requires Co(2+) as cofactor. It depends on Zn(2+) as a cofactor. Mn(2+) serves as cofactor. The cofactor is Fe(2+).

The protein resides in the cytoplasm. It catalyses the reaction Release of N-terminal amino acids, preferentially methionine, from peptides and arylamides.. Functionally, cotranslationally removes the N-terminal methionine from nascent proteins. The N-terminal methionine is often cleaved when the second residue in the primary sequence is small and uncharged (Met-Ala-, Cys, Gly, Pro, Ser, Thr, or Val). This chain is Methionine aminopeptidase 2, found in Trichophyton verrucosum (strain HKI 0517).